The chain runs to 300 residues: MTAVLPLPLPLADPAPRTPRLQREPLRLAKRLRHAVGQAIADFGMIAPGDKVMVCLSGGKDSYTLLDMLLQLQRSAPVPFTLVAVNLDQKQPDFPADVLPTYLRAQQVPFDIIEQDTYSVVSRVIPQGKTMCSLCSRLRRGALYAYAQAHGVTKIALGHHRDDIVATFFMNLFHHARLAAMAPKLRSDDGAHVVIRPLAYVREADIAAYAQARQFPIIPCNLCGSQENLQRQQVGRMLQQWDREQPGRVDQIARALGDVRPEQLADRTLFDFPGLGGGADAPLPDAAGWLAGSAAEHARD.

The short motif at 57–62 is the PP-loop motif element; the sequence is SGGKDS. [4Fe-4S] cluster-binding residues include Cys132, Cys135, and Cys223.

Belongs to the TtcA family. As to quaternary structure, homodimer. The cofactor is Mg(2+). Requires [4Fe-4S] cluster as cofactor.

It is found in the cytoplasm. The enzyme catalyses cytidine(32) in tRNA + S-sulfanyl-L-cysteinyl-[cysteine desulfurase] + AH2 + ATP = 2-thiocytidine(32) in tRNA + L-cysteinyl-[cysteine desulfurase] + A + AMP + diphosphate + H(+). It functions in the pathway tRNA modification. In terms of biological role, catalyzes the ATP-dependent 2-thiolation of cytidine in position 32 of tRNA, to form 2-thiocytidine (s(2)C32). The sulfur atoms are provided by the cysteine/cysteine desulfurase (IscS) system. The chain is tRNA-cytidine(32) 2-sulfurtransferase from Xanthomonas campestris pv. campestris (strain 8004).